A 342-amino-acid polypeptide reads, in one-letter code: Ribosomal RNA small subunit methyltransferase C (342 aa).

This sequence belongs to the methyltransferase superfamily. RsmC family. In terms of assembly, monomer.

It is found in the cytoplasm. It carries out the reaction guanosine(1207) in 16S rRNA + S-adenosyl-L-methionine = N(2)-methylguanosine(1207) in 16S rRNA + S-adenosyl-L-homocysteine + H(+). In terms of biological role, specifically methylates the guanine in position 1207 of 16S rRNA in the 30S particle. The chain is Ribosomal RNA small subunit methyltransferase C from Hahella chejuensis (strain KCTC 2396).